The primary structure comprises 162 residues: Putative ureidoglycolate lyase (162 aa).

The protein belongs to the ureidoglycolate lyase family. As to quaternary structure, homodimer. The cofactor is Ni(2+).

The catalysed reaction is (S)-ureidoglycolate = urea + glyoxylate. It participates in nitrogen metabolism; (S)-allantoin degradation. Its function is as follows. Catalyzes the catabolism of the allantoin degradation intermediate (S)-ureidoglycolate, generating urea and glyoxylate. Involved in the utilization of allantoin as nitrogen source. The polypeptide is Putative ureidoglycolate lyase (Agrobacterium fabrum (strain C58 / ATCC 33970) (Agrobacterium tumefaciens (strain C58))).